Here is a 126-residue protein sequence, read N- to C-terminus: uncharacterized protein (126 aa).

Residues 1–27 (MSKSKTPNFDDMEVLDDTNDEYDDSES) form a disordered region. Positions 10–27 (DDMEVLDDTNDEYDDSES) are enriched in acidic residues.

This is an uncharacterized protein from Halorubrum sp. PV6 (HRPV-1).